We begin with the raw amino-acid sequence, 735 residues long: Mitochondrial potassium channel ATP-binding subunit (735 aa).

A mitochondrion-targeting transit peptide spans 1–25 (MLVHLFRVGIRGGPFPGRLLPPLRF). Residues 26-144 (QTFSAVRNTW…KLFWQFLHPH (119 aa)) lie on the Mitochondrial matrix side of the membrane. Residues 145-165 (LLVLGVAVVLALGAALVNVQI) traverse the membrane as a helical segment. Residues 150 to 437 (VAVVLALGAA…LSVLFGQVVR (288 aa)) enclose the ABC transmembrane type-1 domain. At 166-195 (PLLLGQLVEVVAKYTRDHVGSFMTESQNLS) the chain is on the mitochondrial intermembrane side. Residues 196–216 (THLLILYGVQGLLTFGYLVLL) traverse the membrane as a helical segment. Residues 217-295 (SHVGERMAVD…SLSMLSTRLT (79 aa)) are Mitochondrial matrix-facing. A helical transmembrane segment spans residues 296 to 316 (LLLMVATPALMGVGTLMGSGL). The Mitochondrial intermembrane segment spans residues 317–735 (RKLSRQCQEQ…EGPRSHQHKS (419 aa)). Positions 472–709 (VTFQNVCFSY…GGLYAELIRR (238 aa)) constitute an ABC transporter domain. 507–514 (GQSGGGKT) contacts ATP. Residues 712 to 735 (LDAPRTAAPPPKKPEGPRSHQHKS) form a disordered region.

It belongs to the ABC transporter superfamily. ABCB family. Multidrug resistance exporter (TC 3.A.1.201) subfamily. In terms of assembly, the mitochondrial potassium channel (mitoK(ATP)) is composed of 4 subunits of CCDC51/MITOK and 4 subunits of ABCB8/MITOSUR. Interacts with C10orf88/PAAT. Interacts with NRP1; NRP1 regulates ABCB8/MITOSUR protein levels in mitochondria. Ubiquitous.

The protein localises to the mitochondrion inner membrane. Channel activity inhibited by ATP via ABCB8/MITOSUR subunit. Its function is as follows. ATP-binding subunit of the mitochondrial ATP-gated potassium channel (mitoK(ATP)). Together with pore-forming subunit CCDC51/MITOK of the mitoK(ATP) channel, mediates ATP-dependent potassium currents across the mitochondrial inner membrane. An increase in ATP intracellular levels closes the channel, inhibiting K(+) transport, whereas a decrease in ATP levels enhances K(+) uptake in the mitochondrial matrix. Plays a role in mitochondrial iron transport. Required for maintenance of normal cardiac function, possibly by influencing mitochondrial iron export and regulating the maturation of cytosolic iron sulfur cluster-containing enzymes. The protein is Mitochondrial potassium channel ATP-binding subunit of Homo sapiens (Human).